Here is a 435-residue protein sequence, read N- to C-terminus: Glucan 1,3-beta-glucosidase (435 aa).

Positions 1–30 (MLFPVLHLPKAMKFSSFSLIASSLLSLVAA) are cleaved as a signal peptide. Glu222 (proton donor) is an active-site residue. Disulfide bonds link Cys306–Cys432 and Cys331–Cys357. Glu323 (nucleophile) is an active-site residue.

This sequence belongs to the glycosyl hydrolase 5 (cellulase A) family.

Its subcellular location is the secreted. It carries out the reaction Successive hydrolysis of beta-D-glucose units from the non-reducing ends of (1-&gt;3)-beta-D-glucans, releasing alpha-glucose.. Functionally, beta-glucanases participate in the metabolism of beta-glucan, the main structural component of the cell wall. It could also function biosynthetically as a transglycosylase. The sequence is that of Glucan 1,3-beta-glucosidase from Pichia angusta (Yeast).